The following is a 382-amino-acid chain: Chorismate synthase (382 aa).

NADP(+)-binding residues include R39 and R45. FMN contacts are provided by residues 127-129 (RAS), 245-246 (QA), G290, 305-309 (KPIPT), and R331.

This sequence belongs to the chorismate synthase family. Homotetramer. FMNH2 serves as cofactor.

The enzyme catalyses 5-O-(1-carboxyvinyl)-3-phosphoshikimate = chorismate + phosphate. The protein operates within metabolic intermediate biosynthesis; chorismate biosynthesis; chorismate from D-erythrose 4-phosphate and phosphoenolpyruvate: step 7/7. Functionally, catalyzes the anti-1,4-elimination of the C-3 phosphate and the C-6 proR hydrogen from 5-enolpyruvylshikimate-3-phosphate (EPSP) to yield chorismate, which is the branch point compound that serves as the starting substrate for the three terminal pathways of aromatic amino acid biosynthesis. This reaction introduces a second double bond into the aromatic ring system. This chain is Chorismate synthase, found in Desulfitobacterium hafniense (strain DSM 10664 / DCB-2).